We begin with the raw amino-acid sequence, 141 residues long: Large ribosomal subunit protein uL11 (141 aa).

It belongs to the universal ribosomal protein uL11 family. In terms of assembly, part of the ribosomal stalk of the 50S ribosomal subunit. Interacts with L10 and the large rRNA to form the base of the stalk. L10 forms an elongated spine to which L12 dimers bind in a sequential fashion forming a multimeric L10(L12)X complex. In terms of processing, one or more lysine residues are methylated.

Forms part of the ribosomal stalk which helps the ribosome interact with GTP-bound translation factors. This chain is Large ribosomal subunit protein uL11, found in Opitutus terrae (strain DSM 11246 / JCM 15787 / PB90-1).